A 132-amino-acid polypeptide reads, in one-letter code: MARDSLSEAGLHFDELNKLRILDPDVSQQTTELKEECRDFVDKIGHFQKVVGGLIELVDELAKETENEKMKAIGARNLLKSIAKQREAQQQQLYALIAEKKMQLERYRIEYDALCKVEAEQHEFIDQFNLQK.

Positions 87-112 (EAQQQQLYALIAEKKMQLERYRIEYD) form a coiled coil.

The protein localises to the golgi apparatus. It localises to the cis-Golgi network. It is found in the cytoplasm. Its subcellular location is the cytoskeleton. The protein resides in the microtubule organizing center. The protein localises to the centrosome. It localises to the centriole. It is found in the cell projection. Its subcellular location is the cilium. Its function is as follows. Involved in ciliary process assembly. May play a role in the trafficking of ciliary membrane proteins from the Golgi complex to the cilium. Regulates the platelet-derived growth factor receptor-alpha (PDGFRA) signaling pathway. Plays an important role in spermatogenesis, particularly spermiogenesis, when germ cells form flagella. The chain is Intraflagellar transport protein 20 homolog B (ift20-b) from Xenopus laevis (African clawed frog).